The sequence spans 736 residues: Transcription regulator protein BACH1 (736 aa).

The BTB domain maps to 34–100 (CDVTIFVEGQ…AYTAKLILSK (67 aa)). The residue at position 196 (S196) is a Phosphoserine. The span at 286–295 (MEPEETKKDP) shows a compositional bias: basic and acidic residues. Disordered stretches follow at residues 286–312 (MEPE…FPHN) and 349–389 (KPLS…RSSV). Phosphoserine occurs at positions 364 and 445. The bZIP domain maps to 557–620 (CIHDIRRRSK…GETKQNLTGL (64 aa)). The interval 562-578 (RRRSKNRIAAQRCRKRK) is basic motif. The segment at 582–589 (IQNLESEI) is leucine-zipper. Positions 680-719 (LPPCARGNSEPGYARGQESQQMSTATSEQAGPAEQCRQSG) are disordered. Polar residues predominate over residues 696-708 (QESQQMSTATSEQ).

The protein belongs to the bZIP family. CNC subfamily. Heterodimer of BACH1 and MAFK. Post-translationally, ubiquitinated by the SCF(FBXL17) complex or by the by the SCF(FBXO22) complex, leading to its degradation by the proteasome. Under oxidative stress, reactive oxygen species covalently modify cysteine residues on the bZIP domain of BACH1 and release it from chromatin. If the BTB domain of BACH1 remains intact, its beta1-alpha6 degron is recognized by FBXO22, promoting its ubiquitination and degradation. If the structural integrity of the beta1-alpha6 degron is compromised, FBXL17 will transiently associate with the BACH1 BTB dimer and remodel it into stably bound monomer for ubiquitination and degradation.

The protein resides in the nucleus. Functionally, transcriptional regulator that acts as a repressor or activator, depending on the context. Binds to NF-E2 DNA binding sites. Plays important roles in coordinating transcription activation and repression by MAFK. Together with MAF, represses the transcription of genes under the control of the NFE2L2 oxidative stress pathway. The polypeptide is Transcription regulator protein BACH1 (Homo sapiens (Human)).